A 314-amino-acid chain; its full sequence is Very long chain fatty acid elongase 4 (314 aa).

N-linked (GlcNAc...) asparagine glycosylation occurs at Asn-20. 7 helical membrane passes run 42-62 (LMQS…FVWL), 78-98 (VLII…RELF), 127-147 (ALWW…FFIL), 165-185 (MFTL…FFGA), 188-208 (NSFI…GPWI), 217-237 (YLTM…ALSL), and 247-267 (MHWA…NFYI). A disordered region spans residues 274–314 (KKPKTGKTAMNGISANGVSKSEKQLVIENGKKQKNGKAKGD). Over residues 293–304 (KSEKQLVIENGK) the composition is skewed to basic and acidic residues. Over residues 305–314 (KQKNGKAKGD) the composition is skewed to basic residues. The Di-lysine motif motif lies at 310-314 (KAKGD).

This sequence belongs to the ELO family. ELOVL4 subfamily. As to quaternary structure, oligomer. N-glycosylated. Expressed mainly in retina. Also expressed in skin and thymus.

It is found in the endoplasmic reticulum membrane. It carries out the reaction a very-long-chain acyl-CoA + malonyl-CoA + H(+) = a very-long-chain 3-oxoacyl-CoA + CO2 + CoA. It catalyses the reaction hexacosanoyl-CoA + malonyl-CoA + H(+) = 3-oxooctacosanyol-CoA + CO2 + CoA. The enzyme catalyses octacosanoyl-CoA + malonyl-CoA + H(+) = 3-oxo-triacontanoyl-CoA + CO2 + CoA. The catalysed reaction is triacontanoyl-CoA + malonyl-CoA + H(+) = 3-oxo-dotriacontanoyl-CoA + CO2 + CoA. It carries out the reaction (19Z,22Z,25Z,28Z,31Z)-tetratriacontapentaenoyl-CoA + malonyl-CoA + H(+) = 3-oxo-(21Z,24Z,27Z,30Z,33Z)-hexatriacontapentaenoyl-CoA + CO2 + CoA. It catalyses the reaction (4Z,7Z,10Z,13Z,16Z,19Z)-docosahexaenoyl-CoA + malonyl-CoA + H(+) = 3-oxo-(6Z,9Z,12Z,15Z,18Z,21Z)-tetracosahexaenoyl-CoA + CO2 + CoA. The enzyme catalyses (7Z,10Z,13Z,16Z)-docosatetraenoyl-CoA + malonyl-CoA + H(+) = (9Z,12Z,15Z,18Z)-3-oxotetracosatetraenoyl-CoA + CO2 + CoA. The catalysed reaction is (11Z,14Z,17Z,20Z,23Z)-hexacosapentaenoyl-CoA + malonyl-CoA + H(+) = 3-oxo-(13Z,16Z,19Z,22Z,25Z)-octacosapentaenoyl-CoA + CO2 + CoA. It carries out the reaction (13Z,16Z,19Z,22Z,25Z)-octacosapentaenoyl-CoA + malonyl-CoA + H(+) = 3-oxo-(15Z,18Z,21Z,24Z,27Z)-triacontapentaenoyl-CoA + CO2 + CoA. It catalyses the reaction (15Z,18Z,21Z,24Z,27Z)-triacontapentaenoyl-CoA + malonyl-CoA + H(+) = 3-oxo-(17Z,20Z,23Z,26Z,29Z)-dotriacontapentaenoyl-CoA + CO2 + CoA. The enzyme catalyses (17Z,20Z,23Z,26Z,29Z)-dotriacontapentaenoyl-CoA + malonyl-CoA + H(+) = 3-oxo-(19Z,22Z,25Z,28Z,31Z)-tetratriacontapentaenoyl-CoA + CO2 + CoA. The catalysed reaction is (21Z,24Z,27Z,30Z,33Z)-hexatriacontapentaenoyl-CoA + malonyl-CoA + H(+) = 3-oxo-(23Z,26Z,29Z,32Z,35Z)-octatriacontapentaenoyl-CoA + CO2 + CoA. It carries out the reaction (11Z,14Z,17Z,20Z)-hexacosatetraenoyl-CoA + malonyl-CoA + H(+) = (13Z,16Z,19Z,22Z)-3-oxooctacosatetraenoyl-CoA + CO2 + CoA. It catalyses the reaction (13Z,16Z,19Z,22Z)-octacosatetraenoyl-CoA + malonyl-CoA + H(+) = 3-oxo-(15Z,18Z,21Z,24Z)-triacontatetraenoyl-CoA + CO2 + CoA. The enzyme catalyses (15Z,18Z,21Z,24Z)-triacontatetraenoyl-CoA + malonyl-CoA + H(+) = 3-oxo-(17Z,20Z,23Z,26Z)-dotriacontatetraenoyl-CoA + CO2 + CoA. The catalysed reaction is (17Z,20Z,23Z,26Z)-dotriacontatetraenoyl-CoA + malonyl-CoA + H(+) = 3-oxo-(19Z,22Z,25Z,28Z)-tetratriacontatetraenoyl-CoA + CO2 + CoA. It carries out the reaction (19Z,22Z,25Z,28Z)-tetratriacontatetraenoyl-CoA + malonyl-CoA + H(+) = 3-oxo-(21Z,24Z,27Z,30Z)-hexatriacontatetraenoyl-CoA + CO2 + CoA. It catalyses the reaction (21Z,24Z,27Z,30Z)-hexatriacontatetraenoyl-CoA + malonyl-CoA + H(+) = 3-oxo-(23Z,26Z,29Z,32Z)-octatriacontatetraenoyl-CoA + CO2 + CoA. The enzyme catalyses (6Z,9Z,12Z,15Z,18Z,21Z)-tetracosahexaenoyl-CoA + malonyl-CoA + H(+) = 3-oxo-(8Z,11Z,14Z,17Z,20Z,23Z)-hexacosahexaenoyl-CoA + CO2 + CoA. The catalysed reaction is (8Z,11Z,14Z,17Z,20Z,23Z)-hexacosahexaenoyl-CoA + malonyl-CoA + H(+) = 3-oxo-(10Z,13Z,16Z,19Z,22Z,25Z)-octacosahexaenoyl-CoA + CO2 + CoA. It carries out the reaction (10Z,13Z,16Z,19Z,22Z,25Z)-octacosahexaenoyl-CoA + malonyl-CoA + H(+) = 3-oxo-(12Z,15Z,18Z,21Z,24Z,27Z)-triacontahexaenoyl-CoA + CO2 + CoA. It catalyses the reaction (12Z,15Z,18Z,21Z,24Z,27Z)-triacontahexaenoyl-CoA + malonyl-CoA + H(+) = 3-oxo-(14Z,17Z,20Z,23Z,26Z,29Z)-dotriacontahexaenoyl-CoA + CO2 + CoA. The enzyme catalyses (14Z,17Z,20Z,23Z,26Z,29Z)-dotriacontahexaenoyl-CoA + malonyl-CoA + H(+) = 3-oxo-(16Z,19Z,22Z,25Z,28Z,31Z)-tetratriacontahexaenoyl-CoA + CO2 + CoA. The catalysed reaction is (16Z,19Z,22Z,25Z,28Z,31Z)-tetratriacontahexaenoyl-CoA + malonyl-CoA + H(+) = 3-oxo-(18Z,21Z,24Z,27Z,30Z,33Z)-hexatriacontahexaenoyl-CoA + CO2 + CoA. It carries out the reaction (9Z,12Z,15Z,18Z,21Z)-tetracosapentaenoyl-CoA + malonyl-CoA + H(+) = 3-oxo-(11Z,14Z,17Z,20Z,23Z)-hexacosapentaenoyl-CoA + CO2 + CoA. It functions in the pathway lipid metabolism; fatty acid biosynthesis. Catalyzes the first and rate-limiting reaction of the four reactions that constitute the long-chain fatty acids elongation cycle. This endoplasmic reticulum-bound enzymatic process allows the addition of 2 carbons to the chain of long- and very long-chain fatty acids (VLCFAs) per cycle. Condensing enzyme that catalyzes the synthesis of very long chain saturated (VLC-SFA) and polyunsaturated (PUFA) fatty acids that are involved in multiple biological processes as precursors of membrane lipids and lipid mediators. May play a critical role in early brain and skin development. This is Very long chain fatty acid elongase 4 from Macaca fascicularis (Crab-eating macaque).